We begin with the raw amino-acid sequence, 336 residues long: Small ribosomal subunit protein RACK1y (336 aa).

7 WD repeats span residues 15–55 (GHND…TAVA), 74–113 (GHSHFVQDVVLSSDGQFALSGSWDGELRLWDLATGRTTRR), 116–155 (GHTKDVLSVAFSVDNRQIVSAARDNTIKLWNTLGECKYTI), 164–205 (GHTG…LRTK), 208–247 (GHNGYVNAVAVSPDGSLCASGGKDGTTLLWDLTEGKMLYK), 249–287 (DAGAIIHSLCFSPNRYWLCAATEDSVKIWDLESKLVMQD), and 297–336 (SQMLYCTSLSWSADGSTLFAGYTDGTIRVWKVSGFGGYAI).

The protein belongs to the WD repeat G protein beta family. Ribosomal protein RACK1 subfamily. As to quaternary structure, homodimer and heterodimer with RACK1A.

Functionally, component of the RACK1 regulatory proteins that play a role in multiple signal transduction pathways. The sequence is that of Small ribosomal subunit protein RACK1y (RACK1B) from Oryza sativa subsp. japonica (Rice).